The sequence spans 239 residues: RNA polymerase sigma factor FliA (239 aa).

Residues 16 to 88 form a sigma-70 factor domain-2 region; it reads LWQRYVPLVR…MLDELRSRDW (73 aa). Positions 43-46 match the Interaction with polymerase core subunit RpoC motif; it reads DLLQ. The tract at residues 96-166 is sigma-70 factor domain-3; it reads NAREVAQAIG…IELVTDDHQR (71 aa). Residues 185–233 form a sigma-70 factor domain-4 region; it reads AIETLPEREKLVLTLYYQEELNLKEIGAVLEVGESRVSQLHSQAIKRLR. Positions 207–226 form a DNA-binding region, H-T-H motif; sequence LKEIGAVLEVGESRVSQLHS.

The protein belongs to the sigma-70 factor family. FliA subfamily.

Its subcellular location is the cytoplasm. In terms of biological role, sigma factors are initiation factors that promote the attachment of RNA polymerase to specific initiation sites and are then released. This sigma factor controls the expression of flagella-related genes. This chain is RNA polymerase sigma factor FliA, found in Escherichia coli O157:H7.